Reading from the N-terminus, the 519-residue chain is 2,3-bisphosphoglycerate-independent phosphoglycerate mutase (519 aa).

Aspartate 9 and serine 60 together coordinate Mn(2+). Serine 60 acts as the Phosphoserine intermediate in catalysis. Residues 76–91 (DSARVSDSIARSRGEA) are compositionally biased toward basic and acidic residues. Residues 76–102 (DSARVSDSIARSRGEAPPDDDAQDPPF) form a disordered region. Substrate-binding positions include histidine 134, 163–164 (RD), arginine 195, arginine 201, 267–270 (RSDR), and lysine 341. Mn(2+)-binding residues include aspartate 408, histidine 412, aspartate 449, histidine 450, and histidine 466.

This sequence belongs to the BPG-independent phosphoglycerate mutase family. It depends on Mn(2+) as a cofactor.

The enzyme catalyses (2R)-2-phosphoglycerate = (2R)-3-phosphoglycerate. The protein operates within carbohydrate degradation; glycolysis; pyruvate from D-glyceraldehyde 3-phosphate: step 3/5. Its function is as follows. Catalyzes the interconversion of 2-phosphoglycerate and 3-phosphoglycerate. The chain is 2,3-bisphosphoglycerate-independent phosphoglycerate mutase from Haloarcula marismortui (strain ATCC 43049 / DSM 3752 / JCM 8966 / VKM B-1809) (Halobacterium marismortui).